A 174-amino-acid chain; its full sequence is Guided entry of tail-anchored proteins factor 1 (174 aa).

Residues 1 to 8 (MSSAAADH) lie on the Lumenal side of the membrane. A helical transmembrane segment spans residues 9-29 (WAWLLVLSFVFGCNVLRVLLP). Over 30–99 (SFSSFMSRVL…VKARTAQLAK (70 aa)) the chain is Cytoplasmic. Positions 39–94 (LQKDAEQESQMRAEIQDMKQELSTVNMMDEFARYARLERKINKMTDKLKTHVKART) form a coiled coil. An interaction with GET3/TRC40 region spans residues 39–97 (LQKDAEQESQMRAEIQDMKQELSTVNMMDEFARYARLERKINKMTDKLKTHVKARTAQL). A helical membrane pass occupies residues 100-120 (IKWVISVAFYVLQAALMISLI). Residues 121–148 (WKYYSVPVAVVPSKWITPLDRLVAFPTR) lie on the Lumenal side of the membrane. The helical transmembrane segment at 149–169 (VAGGVGITCWILVCNKVVAIV) threads the bilayer. Topologically, residues 170–174 (LHPFS) are cytoplasmic.

The protein belongs to the WRB/GET1 family. Component of the Golgi to ER traffic (GET) complex, which is composed of GET1/WRB, CAMLG/GET2 and GET3. Within the complex, GET1 and CAMLG form a heterotetramer which is stabilized by phosphatidylinositol binding and which binds to the GET3 homodimer. Interacts with CAMLG (via C-terminus). GET3 shows a higher affinity for CAMLG than for GET1.

Its subcellular location is the endoplasmic reticulum membrane. Required for the post-translational delivery of tail-anchored (TA) proteins to the endoplasmic reticulum. Together with CAMLG/GET2, acts as a membrane receptor for soluble GET3/TRC40, which recognizes and selectively binds the transmembrane domain of TA proteins in the cytosol. Required to ensure correct topology and ER insertion of CAMLG. The chain is Guided entry of tail-anchored proteins factor 1 from Pongo abelii (Sumatran orangutan).